We begin with the raw amino-acid sequence, 290 residues long: Bifunctional protein FolD (290 aa).

Residues 164–166 (GRS), S193, and I234 contribute to the NADP(+) site.

This sequence belongs to the tetrahydrofolate dehydrogenase/cyclohydrolase family. Homodimer.

It carries out the reaction (6R)-5,10-methylene-5,6,7,8-tetrahydrofolate + NADP(+) = (6R)-5,10-methenyltetrahydrofolate + NADPH. The catalysed reaction is (6R)-5,10-methenyltetrahydrofolate + H2O = (6R)-10-formyltetrahydrofolate + H(+). It participates in one-carbon metabolism; tetrahydrofolate interconversion. Functionally, catalyzes the oxidation of 5,10-methylenetetrahydrofolate to 5,10-methenyltetrahydrofolate and then the hydrolysis of 5,10-methenyltetrahydrofolate to 10-formyltetrahydrofolate. The protein is Bifunctional protein FolD of Cytophaga hutchinsonii (strain ATCC 33406 / DSM 1761 / CIP 103989 / NBRC 15051 / NCIMB 9469 / D465).